Here is a 397-residue protein sequence, read N- to C-terminus: Elongation factor Tu (397 aa).

The tr-type G domain occupies 10–207 (KPHCNIGTIG…EVDKYIPQPE (198 aa)). The G1 stretch occupies residues 19–26 (GHVDHGKT). A GTP-binding site is contributed by 19-26 (GHVDHGKT). Thr-26 provides a ligand contact to Mg(2+). Positions 61-65 (GITIS) are G2. Positions 82 to 85 (DCPG) are G3. GTP contacts are provided by residues 82 to 86 (DCPGH) and 137 to 140 (NKCD). The G4 stretch occupies residues 137–140 (NKCD). The interval 175 to 177 (SAL) is G5.

This sequence belongs to the TRAFAC class translation factor GTPase superfamily. Classic translation factor GTPase family. EF-Tu/EF-1A subfamily. Monomer.

Its subcellular location is the cytoplasm. The catalysed reaction is GTP + H2O = GDP + phosphate + H(+). Functionally, GTP hydrolase that promotes the GTP-dependent binding of aminoacyl-tRNA to the A-site of ribosomes during protein biosynthesis. This is Elongation factor Tu from Azorhizobium caulinodans (strain ATCC 43989 / DSM 5975 / JCM 20966 / LMG 6465 / NBRC 14845 / NCIMB 13405 / ORS 571).